Consider the following 112-residue polypeptide: UPF0145 protein Acid_4599 (112 aa).

The protein belongs to the UPF0145 family.

This Solibacter usitatus (strain Ellin6076) protein is UPF0145 protein Acid_4599.